Consider the following 2259-residue polypeptide: Protein Ycf2 (2259 aa).

1556-1563 (GSQETGRS) is an ATP binding site.

This sequence belongs to the Ycf2 family.

It is found in the plastid. The protein resides in the chloroplast stroma. Probable ATPase of unknown function. Its presence in a non-photosynthetic plant (Epifagus virginiana) and experiments in tobacco indicate that it has an essential function which is probably not related to photosynthesis. The sequence is that of Protein Ycf2 from Physcomitrium patens (Spreading-leaved earth moss).